The chain runs to 377 residues: Guanine nucleotide-binding protein subunit alpha-13 (377 aa).

2 S-palmitoyl cysteine lipidation sites follow: C14 and C18. The region spanning 47 to 377 (RLVKILLLGA…HDNLKQLMLQ (331 aa)) is the G-alpha domain. The G1 motif stretch occupies residues 50-63 (KILLLGAGESGKST). GTP-binding positions include 58 to 63 (ESGKST), S173, and 197 to 200 (LLAR). S62 is a binding site for Mg(2+). The G2 motif stretch occupies residues 195–203 (DILLARRPT). A Mg(2+)-binding site is contributed by T203. Phosphothreonine; by PKA is present on T203. The G3 motif stretch occupies residues 218 to 227 (FKMVDVGGQR). The segment at 287–294 (ILFLNKTD) is G4 motif. GTP-binding positions include 291–294 (NKTD) and A349. A G5 motif region spans residues 347 to 352 (TTAINT).

It belongs to the G-alpha family. G(12) subfamily. As to quaternary structure, g proteins are composed of 3 units; alpha, beta and gamma. The alpha chain contains the guanine nucleotide binding site. Interacts with UBXD5. Interacts with HAX1. Interacts (in GTP-bound form) with PPP5C (via TPR repeats); activates PPP5C phosphatase activity and translocates PPP5C to the cell membrane. Interacts with RGS22. Interacts with ARHGEF1. Interacts (in GTP-bound form) with ARHGEF11 (via RGS domain). Interacts (in GTP-bound form) with ARHGEF12 (via RGS domain). Interacts (in GTP-bound form) with CTNND1. Interacts with GAS2L2. Interacts with GPR35. Interacts with GPR174. In terms of processing, palmitoylation is critical for proper membrane localization and signaling. Post-translationally, phosphorylation on Thr-203 by PKA destabilizes the heterotrimer of alpha, beta and gamma, and inhibits Rho activation.

The protein localises to the membrane. It is found in the melanosome. It localises to the cytoplasm. The protein resides in the nucleus. Functionally, guanine nucleotide-binding proteins (G proteins) are involved as modulators or transducers in various transmembrane signaling systems. Activates effector molecule RhoA by binding and activating RhoGEFs (ARHGEF1/p115RhoGEF, ARHGEF11/PDZ-RhoGEF and ARHGEF12/LARG). GNA13-dependent Rho signaling subsequently regulates transcription factor AP-1 (activating protein-1). Promotes tumor cell invasion and metastasis by activating RhoA/ROCK signaling pathway. Inhibits CDH1-mediated cell adhesion in process independent from Rho activation. In lymphoid follicles, transmits P2RY8- and S1PR2-dependent signals that lead to inhibition of germinal center (GC) B cell growth and migration outside the GC niche. The sequence is that of Guanine nucleotide-binding protein subunit alpha-13 (Gna13) from Rattus norvegicus (Rat).